The sequence spans 560 residues: Phenylalanine--tRNA ligase beta subunit (560 aa).

A B5 domain is found at 279–354 (LTPKEFEVDL…IAYGYNNIEP (76 aa)). Mg(2+)-binding residues include D332, D338, E341, and D342.

This sequence belongs to the phenylalanyl-tRNA synthetase beta subunit family. Type 2 subfamily. Tetramer of two alpha and two beta subunits. Requires Mg(2+) as cofactor.

The protein localises to the cytoplasm. It carries out the reaction tRNA(Phe) + L-phenylalanine + ATP = L-phenylalanyl-tRNA(Phe) + AMP + diphosphate + H(+). This Thermococcus sibiricus (strain DSM 12597 / MM 739) protein is Phenylalanine--tRNA ligase beta subunit.